The chain runs to 229 residues: 3-dehydroquinate dehydratase (229 aa).

3-dehydroquinate is bound by residues 33-35 (EWR) and Arg-65. The active-site Proton donor/acceptor is the His-121. Lys-146 functions as the Schiff-base intermediate with substrate in the catalytic mechanism. 3-dehydroquinate is bound by residues Arg-188, Ser-207, and Gln-211.

This sequence belongs to the type-I 3-dehydroquinase family. In terms of assembly, homodimer.

The enzyme catalyses 3-dehydroquinate = 3-dehydroshikimate + H2O. The protein operates within metabolic intermediate biosynthesis; chorismate biosynthesis; chorismate from D-erythrose 4-phosphate and phosphoenolpyruvate: step 3/7. Involved in the third step of the chorismate pathway, which leads to the biosynthesis of aromatic amino acids. Catalyzes the cis-dehydration of 3-dehydroquinate (DHQ) and introduces the first double bond of the aromatic ring to yield 3-dehydroshikimate. The polypeptide is 3-dehydroquinate dehydratase (Lactococcus lactis subsp. cremoris (strain MG1363)).